We begin with the raw amino-acid sequence, 98 residues long: NADH-ubiquinone oxidoreductase chain 4L (98 aa).

Transmembrane regions (helical) follow at residues 2-22 (PSISTNIVLAFITALLGMLIF), 29-49 (SLLCLEGMMLSMFILSTLTIL), and 61-81 (ILLLVFAACEAAVGLALLVTV).

The protein belongs to the complex I subunit 4L family. In terms of assembly, core subunit of respiratory chain NADH dehydrogenase (Complex I) which is composed of 45 different subunits.

It is found in the mitochondrion inner membrane. It catalyses the reaction a ubiquinone + NADH + 5 H(+)(in) = a ubiquinol + NAD(+) + 4 H(+)(out). Its function is as follows. Core subunit of the mitochondrial membrane respiratory chain NADH dehydrogenase (Complex I) which catalyzes electron transfer from NADH through the respiratory chain, using ubiquinone as an electron acceptor. Part of the enzyme membrane arm which is embedded in the lipid bilayer and involved in proton translocation. The sequence is that of NADH-ubiquinone oxidoreductase chain 4L (MT-ND4L) from Eulemur rubriventer (Red-bellied lemur).